The chain runs to 152 residues: Transcriptional regulator MraZ (152 aa).

SpoVT-AbrB domains follow at residues 5-52 (ANAV…PLPE) and 81-124 (AVDL…NEDA).

It belongs to the MraZ family. As to quaternary structure, forms oligomers.

Its subcellular location is the cytoplasm. The protein localises to the nucleoid. This chain is Transcriptional regulator MraZ, found in Azotobacter vinelandii (strain DJ / ATCC BAA-1303).